A 262-amino-acid polypeptide reads, in one-letter code: Cutinase 1 (262 aa).

Tyrosine 61 is a binding site for poly(ethylene terephthalate). Serine 131 serves as the catalytic Nucleophile. Residues methionine 132 and tryptophan 156 each coordinate poly(ethylene terephthalate). Active-site charge relay system residues include aspartate 177 and histidine 209. The cysteines at positions 242 and 260 are disulfide-linked.

Belongs to the AB hydrolase superfamily.

The protein resides in the secreted. The protein localises to the periplasm. The enzyme catalyses (ethylene terephthalate)(n) + H2O = (ethylene terephthalate)(n-1) + 4-[(2-hydroxyethoxy)carbonyl]benzoate + H(+). It catalyses the reaction a butanoate ester + H2O = an aliphatic alcohol + butanoate + H(+). The catalysed reaction is an acetyl ester + H2O = an aliphatic alcohol + acetate + H(+). It carries out the reaction cutin + H2O = cutin monomers.. Its function is as follows. Catalyzes the hydrolysis of cutin, a polyester that forms the structure of plant cuticle. Shows esterase activity towards p-nitrophenol-linked aliphatic esters (pNP-aliphatic esters). Capable of degrading the plastic poly(ethylene terephthalate) (PET), the most abundant polyester plastic in the world. Capable of degrading the bioplastic poly(lactic acid) (PLLA). The chain is Cutinase 1 from Thermobifida cellulosilytica.